Here is a 132-residue protein sequence, read N- to C-terminus: Small ribosomal subunit protein uS8 (132 aa).

It belongs to the universal ribosomal protein uS8 family. Part of the 30S ribosomal subunit. Contacts proteins S5 and S12.

One of the primary rRNA binding proteins, it binds directly to 16S rRNA central domain where it helps coordinate assembly of the platform of the 30S subunit. The chain is Small ribosomal subunit protein uS8 from Halalkalibacterium halodurans (strain ATCC BAA-125 / DSM 18197 / FERM 7344 / JCM 9153 / C-125) (Bacillus halodurans).